The following is a 205-amino-acid chain: Probable GTP-binding protein EngB (205 aa).

In terms of domain architecture, EngB-type G spans 27–201; that stretch reads TGIEIAFAGR…AVKLDFWFSP (175 aa). Residues 35–42, 62–66, 80–83, 147–150, and 180–182 contribute to the GTP site; these read GRSNAGKS, GRTQL, DLPG, TKAD, and FSA. Mg(2+) contacts are provided by S42 and T64.

Belongs to the TRAFAC class TrmE-Era-EngA-EngB-Septin-like GTPase superfamily. EngB GTPase family. Mg(2+) is required as a cofactor.

Necessary for normal cell division and for the maintenance of normal septation. This is Probable GTP-binding protein EngB from Haemophilus influenzae (strain PittGG).